Here is a 370-residue protein sequence, read N- to C-terminus: Cytochrome b (370 aa).

The next 4 membrane-spanning stretches (helical) occupy residues 30–50 (FGSM…FLAF), 74–96 (WIFR…LHIF), 109–129 (VWMS…MGYV), and 175–195 (FFVL…GHLI). The heme b site is built by His80 and His94. The heme b site is built by His179 and His193. Residue His198 participates in a ubiquinone binding. 4 helical membrane passes run 221 to 240 (YIGK…VLSL), 284 to 304 (VLGV…ALVN), 316 to 336 (FLVF…QCMV), and 342 to 362 (VLSP…LGIF).

It belongs to the cytochrome b family. As to quaternary structure, the main subunits of complex b-c1 are: cytochrome b, cytochrome c1 and the Rieske protein. The cofactor is heme b.

It is found in the mitochondrion inner membrane. Component of the ubiquinol-cytochrome c reductase complex (complex III or cytochrome b-c1 complex) that is part of the mitochondrial respiratory chain. The b-c1 complex mediates electron transfer from ubiquinol to cytochrome c. Contributes to the generation of a proton gradient across the mitochondrial membrane that is then used for ATP synthesis. The chain is Cytochrome b (ctb-1) from Caenorhabditis briggsae.